The chain runs to 269 residues: Triosephosphate isomerase (269 aa).

Position 8–10 (8–10 (NWK)) interacts with substrate. Residue H105 is the Electrophile of the active site. E183 (proton acceptor) is an active-site residue. Substrate is bound by residues G189, S227, and 248 to 249 (GG).

It belongs to the triosephosphate isomerase family. As to quaternary structure, homodimer.

It is found in the cytoplasm. It catalyses the reaction D-glyceraldehyde 3-phosphate = dihydroxyacetone phosphate. Its pathway is carbohydrate biosynthesis; gluconeogenesis. It participates in carbohydrate degradation; glycolysis; D-glyceraldehyde 3-phosphate from glycerone phosphate: step 1/1. Functionally, involved in the gluconeogenesis. Catalyzes stereospecifically the conversion of dihydroxyacetone phosphate (DHAP) to D-glyceraldehyde-3-phosphate (G3P). This is Triosephosphate isomerase from Psychrobacter arcticus (strain DSM 17307 / VKM B-2377 / 273-4).